Consider the following 205-residue polypeptide: High frequency lysogenization protein HflD homolog (205 aa).

Belongs to the HflD family.

It localises to the cytoplasm. Its subcellular location is the cell inner membrane. The polypeptide is High frequency lysogenization protein HflD homolog (Shewanella baltica (strain OS185)).